Consider the following 488-residue polypeptide: Probable (S)-N-methylcoclaurine 3'-hydroxylase isozyme 2 (488 aa).

A helical membrane pass occupies residues 2-21 (EVLSIAIVSFSFLLFLFFIL). Cysteine 427 is a heme binding site.

The protein belongs to the cytochrome P450 family. Requires heme as cofactor. In terms of tissue distribution, expressed at low levels in roots.

It localises to the endoplasmic reticulum membrane. The protein resides in the microsome membrane. It catalyses the reaction (S)-N-methylcoclaurine + reduced [NADPH--hemoprotein reductase] + O2 = (S)-3'-hydroxy-N-methylcoclaurine + oxidized [NADPH--hemoprotein reductase] + H2O + H(+). The protein operates within alkaloid biosynthesis; (S)-reticuline biosynthesis; (S)-reticuline from (S)-norcoclaurine: step 3/4. In terms of biological role, 3'-hydroxylation of (S)-N-methylcoclaurine. This is Probable (S)-N-methylcoclaurine 3'-hydroxylase isozyme 2 (CYP80B2) from Coptis japonica (Japanese goldthread).